A 388-amino-acid polypeptide reads, in one-letter code: LL-diaminopimelate aminotransferase (388 aa).

Positions 13, 38, 102, 126, and 176 each coordinate substrate. Pyridoxal 5'-phosphate contacts are provided by residues 101 to 102, tyrosine 126, asparagine 176, tyrosine 207, and 235 to 237; these read SK and SLS. Lysine 238 bears the N6-(pyridoxal phosphate)lysine mark. Arginine 246 is a pyridoxal 5'-phosphate binding site. A substrate-binding site is contributed by arginine 364.

The protein belongs to the class-I pyridoxal-phosphate-dependent aminotransferase family. LL-diaminopimelate aminotransferase subfamily. In terms of assembly, homodimer. It depends on pyridoxal 5'-phosphate as a cofactor.

It carries out the reaction (2S,6S)-2,6-diaminopimelate + 2-oxoglutarate = (S)-2,3,4,5-tetrahydrodipicolinate + L-glutamate + H2O + H(+). It functions in the pathway amino-acid biosynthesis; L-lysine biosynthesis via DAP pathway; LL-2,6-diaminopimelate from (S)-tetrahydrodipicolinate (aminotransferase route): step 1/1. In terms of biological role, involved in the synthesis of meso-diaminopimelate (m-DAP or DL-DAP), required for both lysine and peptidoglycan biosynthesis. Catalyzes the direct conversion of tetrahydrodipicolinate to LL-diaminopimelate. This is LL-diaminopimelate aminotransferase from Dehalococcoides mccartyi (strain ATCC BAA-2100 / JCM 16839 / KCTC 5957 / BAV1).